Consider the following 383-residue polypeptide: Centractin (383 aa).

The interval 227 to 246 (PQKEEELLEPDSSSSKPVQP) is disordered.

Belongs to the actin family. ARP1 subfamily.

It localises to the cytoplasm. The protein localises to the cytoskeleton. The protein resides in the microtubule organizing center. Its subcellular location is the centrosome. Its function is as follows. Component of a multi-subunit complex, PPK2 (poly P kinase complex 2) involved in microtubule based vesicle motility. It is associated with the centrosome. PPK2 complex can synthesize a poly chain of hundreds of phosphate residues linked by ATP-like bonds. This is Centractin (arpA) from Dictyostelium discoideum (Social amoeba).